The primary structure comprises 145 residues: Transcription antitermination protein NusB (145 aa).

The protein belongs to the NusB family.

Involved in transcription antitermination. Required for transcription of ribosomal RNA (rRNA) genes. Binds specifically to the boxA antiterminator sequence of the ribosomal RNA (rrn) operons. In Burkholderia mallei (strain NCTC 10247), this protein is Transcription antitermination protein NusB.